Reading from the N-terminus, the 419-residue chain is MQTYLVGGAVRDQLLNLPVKDRDWVVVGATPEQLLSLGYQQVGRDFPVFLHPKTKEEYALARTERKSGAGYTGFICDFSPHISLEQDLIRRDLTINAIAQDNQGKFIDPYEGISDLKNRTLRHISPAFAEDPLRVLRVARFAARYHQLDFSIAPETIALMAEITEKGELQQLTIERVWQETEKALKEKNPEIYFQVLLQVGALKILFPELYALYGVPNPAQYHPEIDSFLHTMLVLQQAVRLTENTEFNKSAVRFAAICHDLGKALTPKDILPHHYGHEKAGIQPIRTLSNRLKVPTYYKELAEFTCEYHSYIHKAFELKPETVIKLFNKLDVWRKPQRFEELMLVCVADTRGRTGFEQTAYPQKDYLRQLYQTALQVNVQQVIEDGFEKQGIRDELTRRRTIAVKTKKAEILPRFVGQ.

ATP is bound by residues Gly-8 and Arg-11. The CTP site is built by Gly-8 and Arg-11. The Mg(2+) site is built by Asp-21 and Asp-23. ATP-binding residues include Arg-91, Arg-137, and Arg-140. 3 residues coordinate CTP: Arg-91, Arg-137, and Arg-140. The HD domain occupies 228–334 (SFLHTMLVLQ…IKLFNKLDVW (107 aa)).

This sequence belongs to the tRNA nucleotidyltransferase/poly(A) polymerase family. Bacterial CCA-adding enzyme type 1 subfamily. As to quaternary structure, monomer. Can also form homodimers and oligomers. Requires Mg(2+) as cofactor. Ni(2+) serves as cofactor.

It carries out the reaction a tRNA precursor + 2 CTP + ATP = a tRNA with a 3' CCA end + 3 diphosphate. The catalysed reaction is a tRNA with a 3' CCA end + 2 CTP + ATP = a tRNA with a 3' CCACCA end + 3 diphosphate. Functionally, catalyzes the addition and repair of the essential 3'-terminal CCA sequence in tRNAs without using a nucleic acid template. Adds these three nucleotides in the order of C, C, and A to the tRNA nucleotide-73, using CTP and ATP as substrates and producing inorganic pyrophosphate. tRNA 3'-terminal CCA addition is required both for tRNA processing and repair. Also involved in tRNA surveillance by mediating tandem CCA addition to generate a CCACCA at the 3' terminus of unstable tRNAs. While stable tRNAs receive only 3'-terminal CCA, unstable tRNAs are marked with CCACCA and rapidly degraded. The polypeptide is Multifunctional CCA protein (Mannheimia succiniciproducens (strain KCTC 0769BP / MBEL55E)).